A 658-amino-acid chain; its full sequence is Integrator complex subunit 9 (658 aa).

K58 participates in a covalent cross-link: Glycyl lysine isopeptide (Lys-Gly) (interchain with G-Cter in SUMO2). The interval 548-572 (DNKHVLQPPPKPTQPTSSKKRKRVN) is disordered. Positions 566 to 570 (KKRKR) match the Nuclear localization signal motif.

Belongs to the metallo-beta-lactamase superfamily. RNA-metabolizing metallo-beta-lactamase-like family. INTS9 subfamily. Component of the Integrator complex, composed of core subunits INTS1, INTS2, INTS3, INTS4, INTS5, INTS6, INTS7, INTS8, INTS9/RC74, INTS10, INTS11/CPSF3L, INTS12, INTS13, INTS14 and INTS15. The core complex associates with protein phosphatase 2A subunits PPP2CA and PPP2R1A, to form the Integrator-PP2A (INTAC) complex. INTS9 is part of the RNA endonuclease subcomplex, composed of INTS4, INTS9, INTS11 and inositol hexakisphosphate (InsP6). Interacts with WDR73; interaction is required for the assembly of the RNA endonuclease subcomplex in the cytoplasm. Interacts with BRAT1; interaction is required for the assembly of the RNA endonuclease subcomplex. Interacts with ESRRB, ESRRB is not a core component of the Integrator complex and this association is a bridge for the interaction with the multiprotein complex Integrator; attracts the transcriptional machinery.

The protein localises to the nucleus. It is found in the cytoplasm. In terms of biological role, component of the integrator complex, a multiprotein complex that terminates RNA polymerase II (Pol II) transcription in the promoter-proximal region of genes. The integrator complex provides a quality checkpoint during transcription elongation by driving premature transcription termination of transcripts that are unfavorably configured for transcriptional elongation: the complex terminates transcription by (1) catalyzing dephosphorylation of the C-terminal domain (CTD) of Pol II subunit POLR2A/RPB1 and SUPT5H/SPT5, (2) degrading the exiting nascent RNA transcript via endonuclease activity and (3) promoting the release of Pol II from bound DNA. The integrator complex is also involved in terminating the synthesis of non-coding Pol II transcripts, such as enhancer RNAs (eRNAs), small nuclear RNAs (snRNAs), telomerase RNAs and long non-coding RNAs (lncRNAs). Mediates recruitment of cytoplasmic dynein to the nuclear envelope, probably as component of the integrator complex. The sequence is that of Integrator complex subunit 9 (Ints9) from Mus musculus (Mouse).